The following is a 128-amino-acid chain: Small ribosomal subunit protein eS8 (128 aa).

The protein belongs to the eukaryotic ribosomal protein eS8 family. Part of the 30S ribosomal subunit.

In Methanococcus maripaludis (strain DSM 14266 / JCM 13030 / NBRC 101832 / S2 / LL), this protein is Small ribosomal subunit protein eS8.